A 427-amino-acid chain; its full sequence is MSKGLPARQDMEKERETLQAWKERVGQELDRVVAFWMEHSHDQEHGGFFTCLGREGRVYDDLKYVWLQGRQVWMYCRLYRTFERFRHAQLLDAAKAGGEFLLRYARVAPPGKKCAFVLTRDGRPVKVQRTIFSECFYTMAMNELWRATGEVRYQTEAVEMMDQIVHWVQEDASGLGRPQLQGAPAAEPMAVPMMLLNLVEQLGEADEELAGKYAELGDWCARRILQHVQRDGQAVLENVSEGGKELPGCLGRQQNPGHTLEAGWFLLRHCIRKGDPELRAHVIDKFLLLPFHSGWDPDHGGLFYFQDADNFCPTQLEWAMKLWWPHSEAMIAFLMGYSDSGDPVLLRLFYQVAEYTFRQFRDPEYGEWFGYLSREGKVALSIKGGPFKGCFHVPRCLAMCEEMLGALLSRPAPAPSPAPTPACRGAE.

Residues 195-216 (LLNLVEQLGEADEELAGKYAEL) are leucine-zipper.

It belongs to the N-acylglucosamine 2-epimerase family. Homodimer. Forms a heterodimer with renin and inhibits its activity.

The catalysed reaction is an N-acyl-D-glucosamine = an N-acyl-D-mannosamine. It functions in the pathway amino-sugar metabolism; N-acetylneuraminate degradation. With respect to regulation, inhibited by N-ethylmaleimide, 5,5'-dithiobis-2-nitrobenzoate and iodoacetic acid. In terms of biological role, catalyzes the interconversion of N-acetylglucosamine to N-acetylmannosamine. Involved in the N-glycolylneuraminic acid (Neu5Gc) degradation pathway: although human is not able to catalyze formation of Neu5Gc due to the inactive CMAHP enzyme, Neu5Gc is present in food and must be degraded. This is N-acylglucosamine 2-epimerase (RENBP) from Homo sapiens (Human).